Reading from the N-terminus, the 466-residue chain is Reticulophagy regulator 3 (466 aa).

Residues Met1–Trp80 are Cytoplasmic-facing. The residue at position 26 (Ser26) is a Phosphoserine. A helical membrane pass occupies residues Phe81–Val101. The Lumenal segment spans residues Cys102 to Lys168. The helical transmembrane segment at Phe169–Ile187 threads the bilayer. The Cytoplasmic portion of the chain corresponds to Pro188–Leu192. Residues Ser193–Leu211 traverse the membrane as a helical segment. The Lumenal portion of the chain corresponds to Trp212–Glu381. A disordered region spans residues Arg244–Glu263. Residues Leu248–Asp259 show a composition bias toward basic and acidic residues. A Phosphothreonine modification is found at Thr254. Residues Ser258 and Ser260 each carry the phosphoserine modification. Thr283 bears the Phosphothreonine mark. 4 positions are modified to phosphoserine: Ser285, Ser288, Ser293, and Ser303. The disordered stretch occupies residues Ser285–Ser335. A compositionally biased stretch (polar residues) spans Cys294–Thr310. Phosphothreonine occurs at positions 307 and 310. 3 positions are modified to phosphoserine: Ser313, Ser320, and Ser360. A compositionally biased stretch (basic and acidic residues) spans Leu316 to Pro331. A helical transmembrane segment spans residues Leu382–Val401. Over Ser402–His466 the chain is Cytoplasmic. The segment at Glu412–Gly444 is disordered. At Thr440 the chain carries Phosphothreonine. The LIR motif signature appears at Asp445 to Leu450.

Belongs to the RETREG family. Interacts with ATG8 family modifier proteins MAP1LC3A, MAP1LC3B, GABARAPL1 and GABARAPL2. Also interacts with ATG8 family modifier protein GABARAP. Interacts with CANX. Interacts with RTN4 isoform B. In terms of tissue distribution, widely expressed with highest levels in brain, lung, liver, muscle and spleen (protein level). Mainly expressed in the central nervous system and in parenchymatous organs including liver, lung and kidney.

Its subcellular location is the endoplasmic reticulum membrane. Its function is as follows. Endoplasmic reticulum (ER)-anchored autophagy regulator which exists in an inactive state under basal conditions but is activated following cellular stress. When activated, induces ER fragmentation and mediates ER delivery into lysosomes through sequestration into autophagosomes via interaction with ATG8 family proteins. Promotes ER membrane curvature and ER tubulation required for subsequent ER fragmentation and engulfment into autophagosomes. Required for collagen quality control in a LIR motif-dependent manner. Mediates NRF1-enhanced neurite outgrowth. This Mus musculus (Mouse) protein is Reticulophagy regulator 3 (Retreg3).